The primary structure comprises 115 residues: uncharacterized protein (115 aa).

The next 2 helical transmembrane spans lie at 11 to 31 and 85 to 105; these read FLYLIVAMVILCPLGILLVWN and GYIISAIVGVILCVGAYYALI.

It to M.thermoautotrophicum MTH1706.

The protein resides in the cell membrane. This is an uncharacterized protein from Methanocaldococcus jannaschii (strain ATCC 43067 / DSM 2661 / JAL-1 / JCM 10045 / NBRC 100440) (Methanococcus jannaschii).